Consider the following 424-residue polypeptide: Protein shisa-9 (424 aa).

The first 23 residues, 1-23, serve as a signal peptide directing secretion; the sequence is MRRVLRLLLGCFLTELCARMCRA. At 24–149 the chain is on the extracellular side; that stretch reads QERSGHGQLA…DPLHDPTKDK (126 aa). Residues Asn45, Asn89, and Asn116 are each glycosylated (N-linked (GlcNAc...) asparagine). A helical membrane pass occupies residues 150–170; the sequence is TNLIVYIICGVVAVMVLVGIF. Residues 171–424 lie on the Cytoplasmic side of the membrane; the sequence is TKLGLEKAHR…ITNSKTEVTV (254 aa). Disordered regions lie at residues 333 to 373 and 389 to 424; these read PRAF…TWDP and LGIA…EVTV. Composition is skewed to polar residues over residues 362-373 and 402-424; these read YNSTANFKTWDP and TRTQ…EVTV.

This sequence belongs to the shisa family. SHISA9 subfamily. As to quaternary structure, component of some AMPA receptors (ionotropic glutamate receptors) complex, at least composed of some AMPA receptor (GRIA1, GRIA2 and/or GRIA3), CACNG2 and SHISA9, as well as low level of DLG4. Brain-specific. Mainly expressed in neurons, including in hippocampus, cerebral cortex, striatum, thalamus, olfactory bulb and cerebellum. Expressed in most brain structures during embryonic and postnatal development.

It localises to the cell projection. The protein localises to the dendritic spine membrane. Its subcellular location is the synapse. Regulator of short-term neuronal synaptic plasticity in the dentate gyrus. Associates with AMPA receptors (ionotropic glutamate receptors) in synaptic spines and promotes AMPA receptor desensitization at excitatory synapses. The protein is Protein shisa-9 (Shisa9) of Mus musculus (Mouse).